We begin with the raw amino-acid sequence, 167 residues long: Mediator of RNA polymerase II transcription subunit 10 (167 aa).

A compositionally biased stretch (gly residues) spans 141–158 (TGGRTVGGEGEGAGQGEG). Residues 141–167 (TGGRTVGGEGEGAGQGEGGEGRGEGGN) form a disordered region.

This sequence belongs to the Mediator complex subunit 10 family. As to quaternary structure, component of the Mediator complex.

It is found in the nucleus. In terms of biological role, component of the Mediator complex, a coactivator involved in the regulated transcription of nearly all RNA polymerase II-dependent genes. Mediator functions as a bridge to convey information from gene-specific regulatory proteins to the basal RNA polymerase II transcription machinery. Mediator is recruited to promoters by direct interactions with regulatory proteins and serves as a scaffold for the assembly of a functional preinitiation complex with RNA polymerase II and the general transcription factors. The sequence is that of Mediator of RNA polymerase II transcription subunit 10 (NUT2) from Chaetomium globosum (strain ATCC 6205 / CBS 148.51 / DSM 1962 / NBRC 6347 / NRRL 1970) (Soil fungus).